The chain runs to 465 residues: FeMo cofactor biosynthesis protein FixZ (465 aa).

The disordered stretch occupies residues 1 to 36; the sequence is MSEPEIKVGKTSSALFDRAPMAPSMPGGRASSSHGL. In terms of domain architecture, Radical SAM core spans 61 to 312; that stretch reads HHYFARMHXX…MRHCQQCRAD (252 aa). Residues cysteine 75 and cysteine 79 each coordinate [4Fe-4S] cluster. Tyrosine 81 lines the S-adenosyl-L-methionine pocket. Residue cysteine 82 participates in [4Fe-4S] cluster binding. S-adenosyl-L-methionine is bound by residues glycine 129, threonine 181, and isoleucine 233. Positions 306 and 309 each coordinate [4Fe-4S] cluster.

Belongs to the radical SAM superfamily. NifB family. [4Fe-4S] cluster is required as a cofactor.

It participates in cofactor biosynthesis; Fe-Mo cofactor biosynthesis. Functionally, involved in the biosynthesis of the iron-molybdenum cofactor (FeMo-co or M-cluster) found in the dinitrogenase enzyme of the nitrogenase complex in nitrogen-fixing microorganisms. Catalyzes the crucial step of radical SAM-dependent carbide insertion that occurs concomitant with the insertion of a 9th sulfur and the rearrangement/coupling of two [4Fe-4S] clusters into a [8Fe-9S-C] cluster, the precursor to the M-cluster. The protein is FeMo cofactor biosynthesis protein FixZ (fixZ) of Rhizobium leguminosarum.